A 283-amino-acid polypeptide reads, in one-letter code: Formamidopyrimidine-DNA glycosylase (283 aa).

Catalysis depends on P2, which acts as the Schiff-base intermediate with DNA. Residue E3 is the Proton donor of the active site. K58 acts as the Proton donor; for beta-elimination activity in catalysis. Residues H100, R119, and K162 each coordinate DNA. The segment at R247 to R283 adopts an FPG-type zinc-finger fold. Residue R273 is the Proton donor; for delta-elimination activity of the active site.

This sequence belongs to the FPG family. As to quaternary structure, monomer. Requires Zn(2+) as cofactor.

It carries out the reaction Hydrolysis of DNA containing ring-opened 7-methylguanine residues, releasing 2,6-diamino-4-hydroxy-5-(N-methyl)formamidopyrimidine.. The enzyme catalyses 2'-deoxyribonucleotide-(2'-deoxyribose 5'-phosphate)-2'-deoxyribonucleotide-DNA = a 3'-end 2'-deoxyribonucleotide-(2,3-dehydro-2,3-deoxyribose 5'-phosphate)-DNA + a 5'-end 5'-phospho-2'-deoxyribonucleoside-DNA + H(+). Its function is as follows. Involved in base excision repair of DNA damaged by oxidation or by mutagenic agents. Acts as a DNA glycosylase that recognizes and removes damaged bases. Has a preference for oxidized purines, such as 7,8-dihydro-8-oxoguanine (8-oxoG). Has AP (apurinic/apyrimidinic) lyase activity and introduces nicks in the DNA strand. Cleaves the DNA backbone by beta-delta elimination to generate a single-strand break at the site of the removed base with both 3'- and 5'-phosphates. The polypeptide is Formamidopyrimidine-DNA glycosylase (Jannaschia sp. (strain CCS1)).